The primary structure comprises 833 residues: Protein translocase subunit SecA (833 aa).

Residues Gln-87, 105–109, and Asp-494 each bind ATP; that span reads GEGKT. The disordered stretch occupies residues 789–816; the sequence is PAAVAYSGGEAEAGPAQPHREDPKVGRN. The span at 806–815 shows a compositional bias: basic and acidic residues; it reads PHREDPKVGR. Cys-819, Cys-821, Cys-830, and Cys-831 together coordinate Zn(2+).

Belongs to the SecA family. In terms of assembly, monomer and homodimer. Part of the essential Sec protein translocation apparatus which comprises SecA, SecYEG and auxiliary proteins SecDF-YajC and YidC. Zn(2+) is required as a cofactor.

It localises to the cell inner membrane. The protein localises to the cytoplasm. It carries out the reaction ATP + H2O + cellular proteinSide 1 = ADP + phosphate + cellular proteinSide 2.. Its function is as follows. Part of the Sec protein translocase complex. Interacts with the SecYEG preprotein conducting channel. Has a central role in coupling the hydrolysis of ATP to the transfer of proteins into and across the cell membrane, serving as an ATP-driven molecular motor driving the stepwise translocation of polypeptide chains across the membrane. This chain is Protein translocase subunit SecA, found in Nitratidesulfovibrio vulgaris (strain DP4) (Desulfovibrio vulgaris).